The chain runs to 360 residues: Protein Wnt-2 (360 aa).

The signal sequence occupies residues 1–25; the sequence is MNAPLAGIWPWLPLLLTWLAPEVSS. Intrachain disulfides connect C76–C87, C127–C135, C137–C157, C206–C220, C208–C215, C278–C309, C294–C304, C308–C348, C324–C339, C326–C336, and C331–C332. S212 carries O-palmitoleoyl serine; by PORCN lipidation. A glycan (N-linked (GlcNAc...) asparagine) is linked at N295.

The protein belongs to the Wnt family. Post-translationally, palmitoleoylation is required for efficient binding to frizzled receptors. Depalmitoleoylation leads to Wnt signaling pathway inhibition.

The protein resides in the secreted. The protein localises to the extracellular space. Its subcellular location is the extracellular matrix. Its function is as follows. Ligand for members of the frizzled family of seven transmembrane receptors. Functions in the canonical Wnt signaling pathway that results in activation of transcription factors of the TCF/LEF family. Functions as a upstream regulator of FGF10 expression. Plays an important role in embryonic lung development. May contribute to embryonic brain development by regulating the proliferation of dopaminergic precursors and neurons. This Loxodonta africana (African elephant) protein is Protein Wnt-2 (WNT2).